Consider the following 30-residue polypeptide: Beta-endorphin-2 (30 aa).

Y1 carries the post-translational modification N-acetyltyrosine.

The protein belongs to the POMC family.

The protein resides in the secreted. The protein is Beta-endorphin-2 of Oncorhynchus keta (Chum salmon).